The chain runs to 376 residues: tRNA(Met) cytidine acetate ligase (376 aa).

Residues 7-20, G102, N160, and R181 contribute to the ATP site; that span reads IAEYNPFHNGHYYQ.

It belongs to the TmcAL family.

Its subcellular location is the cytoplasm. It catalyses the reaction cytidine(34) in elongator tRNA(Met) + acetate + ATP = N(4)-acetylcytidine(34) in elongator tRNA(Met) + AMP + diphosphate. Its function is as follows. Catalyzes the formation of N(4)-acetylcytidine (ac(4)C) at the wobble position of elongator tRNA(Met), using acetate and ATP as substrates. First activates an acetate ion to form acetyladenylate (Ac-AMP) and then transfers the acetyl group to tRNA to form ac(4)C34. The sequence is that of tRNA(Met) cytidine acetate ligase from Exiguobacterium sp. (strain ATCC BAA-1283 / AT1b).